We begin with the raw amino-acid sequence, 98 residues long: Aspartyl/glutamyl-tRNA(Asn/Gln) amidotransferase subunit C (98 aa).

The protein belongs to the GatC family. In terms of assembly, heterotrimer of A, B and C subunits.

The enzyme catalyses L-glutamyl-tRNA(Gln) + L-glutamine + ATP + H2O = L-glutaminyl-tRNA(Gln) + L-glutamate + ADP + phosphate + H(+). It catalyses the reaction L-aspartyl-tRNA(Asn) + L-glutamine + ATP + H2O = L-asparaginyl-tRNA(Asn) + L-glutamate + ADP + phosphate + 2 H(+). In terms of biological role, allows the formation of correctly charged Asn-tRNA(Asn) or Gln-tRNA(Gln) through the transamidation of misacylated Asp-tRNA(Asn) or Glu-tRNA(Gln) in organisms which lack either or both of asparaginyl-tRNA or glutaminyl-tRNA synthetases. The reaction takes place in the presence of glutamine and ATP through an activated phospho-Asp-tRNA(Asn) or phospho-Glu-tRNA(Gln). This chain is Aspartyl/glutamyl-tRNA(Asn/Gln) amidotransferase subunit C, found in Beutenbergia cavernae (strain ATCC BAA-8 / DSM 12333 / CCUG 43141 / JCM 11478 / NBRC 16432 / NCIMB 13614 / HKI 0122).